Consider the following 118-residue polypeptide: Holo-[acyl-carrier-protein] synthase (118 aa).

Mg(2+)-binding residues include Asp8 and Glu60.

It belongs to the P-Pant transferase superfamily. AcpS family. Mg(2+) serves as cofactor.

The protein localises to the cytoplasm. The catalysed reaction is apo-[ACP] + CoA = holo-[ACP] + adenosine 3',5'-bisphosphate + H(+). In terms of biological role, transfers the 4'-phosphopantetheine moiety from coenzyme A to a Ser of acyl-carrier-protein. The chain is Holo-[acyl-carrier-protein] synthase from Wolbachia sp. subsp. Drosophila simulans (strain wRi).